The sequence spans 343 residues: tRNA N6-adenosine threonylcarbamoyltransferase (343 aa).

Fe cation-binding residues include His-116 and His-120. Residues 138-142 (LVSGG), Asp-171, Gly-184, Asp-188, and Asn-277 each bind substrate. Asp-306 is a Fe cation binding site.

The protein belongs to the KAE1 / TsaD family. Fe(2+) serves as cofactor.

It localises to the cytoplasm. It catalyses the reaction L-threonylcarbamoyladenylate + adenosine(37) in tRNA = N(6)-L-threonylcarbamoyladenosine(37) in tRNA + AMP + H(+). Required for the formation of a threonylcarbamoyl group on adenosine at position 37 (t(6)A37) in tRNAs that read codons beginning with adenine. Is involved in the transfer of the threonylcarbamoyl moiety of threonylcarbamoyl-AMP (TC-AMP) to the N6 group of A37, together with TsaE and TsaB. TsaD likely plays a direct catalytic role in this reaction. In Ligilactobacillus salivarius (strain UCC118) (Lactobacillus salivarius), this protein is tRNA N6-adenosine threonylcarbamoyltransferase.